The following is a 3302-amino-acid chain: Xin actin-binding repeat-containing protein 2 (3302 aa).

A disordered region spans residues 166 to 204 (NDSEETLKPSSAMGTSSYTSARQSKETSTSSYSNHSLTS). A compositionally biased stretch (polar residues) spans 173–187 (KPSSAMGTSSYTSAR). A compositionally biased stretch (low complexity) spans 191 to 204 (ETSTSSYSNHSLTS). Xin repeat units follow at residues 306–321 (AGVQ…TNDS), 341–356 (GEVQ…QPLD), 381–396 (GDVK…QPID), 418–433 (GDVC…RPLD), 456–471 (GDVK…QQLD), 496–511 (GNVK…QPLY), and 534–549 (GDVR…QPLD). Serine 565 is subject to Phosphoserine. Xin repeat units lie at residues 572–587 (GEVG…QPLE) and 606–621 (IDVS…QPLD). Phosphoserine is present on serine 633. 5 Xin repeats span residues 640-655 (GDVK…LPIE), 677-692 (GDVK…QRLE), 713-728 (GHVK…NNLI), 744-759 (GTVE…TPLY), and 782-797 (GDVR…RPID). Residue serine 813 is modified to Phosphoserine. 11 Xin repeats span residues 820–835 (GNVK…QPLD), 859–874 (GDVK…QPME), 892–907 (GDVR…QPLD), 930–945 (GDVR…ENLD), 965–980 (GDVS…QSLD), 1004–1019 (GNVL…QPID), 1040–1055 (GDVR…FSLD), 1077–1092 (GDVK…QPLY), 1115–1130 (GDVR…KPLD), 1152–1167 (GDVS…QPLD), and 1186–1201 (GNVQ…EGGD). Serine 1210 carries the post-translational modification Phosphoserine. 3 Xin repeats span residues 1217 to 1232 (GNVK…HSID), 1254 to 1269 (GDVK…QTLD), and 1289 to 1304 (SDVK…TPIH). Serine 1573 carries the phosphoserine modification. 7 disordered regions span residues 1848 to 1882 (VSAS…VDKT), 1920 to 1939 (AETQ…NPAG), 1957 to 2002 (EKQN…APDK), 2039 to 2296 (YPDC…KPYM), 2311 to 2378 (RQQR…SKAV), 2546 to 2593 (YAAK…ESRV), and 2626 to 2687 (NFQQ…RESQ). Over residues 1859–1873 (KTKESENVRESKDDV) the composition is skewed to basic and acidic residues. Threonine 1930 is subject to Phosphothreonine. Position 1935 is a phosphoserine (serine 1935). Basic and acidic residues predominate over residues 1957–1969 (EKQNSNKDMRKND). 2 stretches are compositionally biased toward pro residues: residues 2051–2062 (LPPPSPPPPPPS) and 2125–2134 (SLPPPPPTAP). Residues 2135-2145 (SQPAHLLSSSV) are compositionally biased toward low complexity. A Phosphoserine modification is found at serine 2158. The span at 2158 to 2167 (SRKETLDSHQ) shows a compositional bias: basic and acidic residues. The interval 2181-2186 (PPTLPK) is interacts with NEBL. Serine 2198, serine 2211, and serine 2252 each carry phosphoserine. Residues 2205–2243 (ELERSLSDVEIKTTLSKDQKSSLVAESREHTEAKQEVFR) show a composition bias toward basic and acidic residues. Composition is skewed to polar residues over residues 2251–2263 (LSIS…SQTV) and 2282–2292 (SFPSGSEQQSP). Residues 2303–2328 (LMIAEEKYRQQREELEKQRRESSCHS) are a coiled coil. Basic and acidic residues-rich tracts occupy residues 2311 to 2325 (RQQR…RESS) and 2333 to 2350 (ETQH…ELQK). Residues 2626–2635 (NFQQTQTQTS) show a composition bias toward polar residues. A compositionally biased stretch (basic and acidic residues) spans 2636-2659 (RIEHKELSQPYSEKKCLRDKDKQQ). Positions 2674–2685 (TQKQSSFSSVRE) are enriched in polar residues. Coiled-coil stretches lie at residues 2696 to 2724 (NILE…SNKS) and 2751 to 2777 (RVAM…EMLV). Positions 2835 to 2934 (RQVATHSEAA…PSPPRSRSEQ (100 aa)) are disordered. Polar residues-rich tracts occupy residues 2836 to 2850 (QVAT…NPAK) and 2891 to 2903 (KSEL…NNSC). The span at 2907 to 2916 (LPRRPMEHTS) shows a compositional bias: basic and acidic residues. 2 positions are modified to phosphoserine: serine 2987 and serine 3225. The tract at residues 3278-3302 (QGNLHNLSKDGLSNGVPRSRPAEFS) is disordered.

Belongs to the Xin family. As to quaternary structure, interacts with ACTN2. Interacts with F-actin. Interacts with NEBL (via SH3 domain). Interacts with Kcna5/Kv1.5 and Scn5a/Nav1.5; the interactions are required for normal action potential configuration in the heart.

The protein resides in the cell junction. Protects actin filaments from depolymerization. Required for correct morphology of cell membranes and maturation of intercalated disks of cardiomyocytes via facilitating localization of XIRP1 and CDH2 to the termini of aligned mature cardiomyocytes. Thereby required for correct postnatal heart development and growth regulation that is crucial for overall heart morphology and diastolic function. Required for normal electrical conduction in the heart including formation of the infranodal ventricular conduction system and normal action potential configuration, as a result of its interaction with the cardiac ion channel components Scn5a/Nav1.5 and Kcna5/Kv1.5. Required for regular actin filament spacing of the paracrystalline array in both inner and outer hair cells of the cochlea, thereby required for maintenance of stereocilia morphology. This is Xin actin-binding repeat-containing protein 2 from Rattus norvegicus (Rat).